The chain runs to 226 residues: MKIHYYGHSCFGLEIGSSFLLFDPFISQNPLSDPTLLDTLNPQYILISHGHFDHIADASPIAKRTQAPILSNFEITLWLEKQGLSQVLPMNLGGNRSFDFGKIHYVQAAHSSSLPDGSYGGTAGGFIVEGPEGILYYAGDTALMSDMKLFGECFQIDIALLPIGGTFTMGVDEAIRAAHLLNCKQVMGVHFDTFEAIKIDHEEAKKKFQDEEIPFRLLKVKESLIL.

It belongs to the UPF0173 family.

The protein is UPF0173 metal-dependent hydrolase Minf_0129 of Methylacidiphilum infernorum (isolate V4) (Methylokorus infernorum (strain V4)).